The primary structure comprises 365 residues: tRNA N6-adenosine threonylcarbamoyltransferase (365 aa).

His119 and His123 together coordinate Fe cation. Residues 141 to 145 (LVSGG), Asp174, Gly187, and Asn288 each bind substrate. Asp316 lines the Fe cation pocket.

This sequence belongs to the KAE1 / TsaD family. It depends on Fe(2+) as a cofactor.

The protein resides in the cytoplasm. The enzyme catalyses L-threonylcarbamoyladenylate + adenosine(37) in tRNA = N(6)-L-threonylcarbamoyladenosine(37) in tRNA + AMP + H(+). Required for the formation of a threonylcarbamoyl group on adenosine at position 37 (t(6)A37) in tRNAs that read codons beginning with adenine. Is involved in the transfer of the threonylcarbamoyl moiety of threonylcarbamoyl-AMP (TC-AMP) to the N6 group of A37, together with TsaE and TsaB. TsaD likely plays a direct catalytic role in this reaction. This chain is tRNA N6-adenosine threonylcarbamoyltransferase, found in Agrobacterium fabrum (strain C58 / ATCC 33970) (Agrobacterium tumefaciens (strain C58)).